The sequence spans 89 residues: Small ribosomal subunit protein uS15 (89 aa).

Belongs to the universal ribosomal protein uS15 family. As to quaternary structure, part of the 30S ribosomal subunit. Forms a bridge to the 50S subunit in the 70S ribosome, contacting the 23S rRNA.

In terms of biological role, one of the primary rRNA binding proteins, it binds directly to 16S rRNA where it helps nucleate assembly of the platform of the 30S subunit by binding and bridging several RNA helices of the 16S rRNA. Its function is as follows. Forms an intersubunit bridge (bridge B4) with the 23S rRNA of the 50S subunit in the ribosome. This chain is Small ribosomal subunit protein uS15, found in Pelodictyon phaeoclathratiforme (strain DSM 5477 / BU-1).